The chain runs to 55 residues: Eclosion hormone (55 aa).

The protein belongs to the insect eclosion hormone family.

It localises to the secreted. In terms of biological role, neuropeptide that triggers the performance of ecdysis behaviors at the end of a molt. It triggers adult behavior patterns: larval, pupal and adult ecdysis, and plasticization during the molt. The sequence is that of Eclosion hormone from Romalea microptera (Eastern lubber grasshopper).